We begin with the raw amino-acid sequence, 444 residues long: MATYTCSVVLASLRCRSSHLVLRKNLCPIYTSVSCAQNRAYAPRSSCLVQAAFVSPSWSSRAFHTSGFCLQDAPPSPPPPSTPPSPPEPEKAPQVVRKSLGQRVVDEIKHFYHGFRLLGIDTKVAARMVWRLLHGQVLTRRERRRLMRTCADLFRLVPFMVFVIVPFMEFLLPVFLKLFPEMLPSTFETESKKEEKVKKKLAAKLEMAKFLQETISEMARRNKAETGADTQQQFSSYVQQVRGTGEQPSTKEIVRFSKLFEDELTLEHLERSQLVALCRLLELPPIGTNNLLRFQLMMQLRSIRADDEMISKEGVENLTVAELQAASRARGMRSLGLTEEQLKEQMKQWLDLHLKENVPPSLLLLSRALYLTELKPKPILPLKQAVEIPKINPAVVEAVEAKDNLADTAPTLKGLKGEELVSGTLLKESAVQSKENTKASANGV.

The transit peptide at 1–24 directs the protein to the mitochondrion; it reads MATYTCSVVLASLRCRSSHLVLRK. At 25–155 the chain is on the mitochondrial intermembrane side; the sequence is NLCPIYTSVS…LMRTCADLFR (131 aa). A disordered region spans residues 73-94; it reads APPSPPPPSTPPSPPEPEKAPQ. Pro residues predominate over residues 74 to 87; that stretch reads PPSPPPPSTPPSPP. A helical transmembrane segment spans residues 156-176; that stretch reads LVPFMVFVIVPFMEFLLPVFL. Topologically, residues 177–444 are mitochondrial matrix; sequence KLFPEMLPST…ENTKASANGV (268 aa). The 219-residue stretch at 199–417 folds into the Letm1 RBD domain; sequence KKLAAKLEMA…TAPTLKGLKG (219 aa).

It localises to the mitochondrion inner membrane. In Xenopus tropicalis (Western clawed frog), this protein is LETM1 domain-containing protein LETM2, mitochondrial (letm2).